Reading from the N-terminus, the 319-residue chain is R-phycoerythrin gamma chain, chloroplastic (319 aa).

Residues 1 to 71 (MDSPAFAVTG…RPKKLASYKR (71 aa)) constitute a chloroplast transit peptide. Phycourobilin contacts are provided by cysteine 96 and cysteine 135. Cysteine 212 serves as a coordination point for (2R,3E)-phycoerythrobilin. Cysteine 299 serves as a coordination point for phycourobilin.

As to quaternary structure, heteromer of 4 alpha, 4 beta and one gamma chains. Contains four covalently linked bilin chromophores.

Its subcellular location is the plastid. The protein localises to the chloroplast thylakoid membrane. The polypeptide is R-phycoerythrin gamma chain, chloroplastic (Corallina officinalis (Coral seaweed)).